The chain runs to 154 residues: SsrA-binding protein (154 aa).

The protein belongs to the SmpB family.

It localises to the cytoplasm. Required for rescue of stalled ribosomes mediated by trans-translation. Binds to transfer-messenger RNA (tmRNA), required for stable association of tmRNA with ribosomes. tmRNA and SmpB together mimic tRNA shape, replacing the anticodon stem-loop with SmpB. tmRNA is encoded by the ssrA gene; the 2 termini fold to resemble tRNA(Ala) and it encodes a 'tag peptide', a short internal open reading frame. During trans-translation Ala-aminoacylated tmRNA acts like a tRNA, entering the A-site of stalled ribosomes, displacing the stalled mRNA. The ribosome then switches to translate the ORF on the tmRNA; the nascent peptide is terminated with the 'tag peptide' encoded by the tmRNA and targeted for degradation. The ribosome is freed to recommence translation, which seems to be the essential function of trans-translation. This Streptococcus thermophilus (strain CNRZ 1066) protein is SsrA-binding protein.